Reading from the N-terminus, the 429-residue chain is MTKIVDIKAFEVLDSRGNPTVMAEVILESGAVGSACAPSGASTGSREALELRDGDKSRYLGKGVLTAVNNINTTIKNLLVGKDALDQRALDKAMIDADGTDNKSVLGANAILAVSLAAAKAAAVAKKVPLYAHIADLNGTPGKYSMPVPMMNIINGGEHADNNVDIQEFMVQPVGAKTFAEALRIGAEIFHNLKKILHDKGLNTAVGDEGGFAPNLPSNEEALKVIIVAVEKAGYKLGEDVTLALDCASSEFYKDGQYDLAGEGKVFSSAEFSDYLADLANKYPIISIEDGKDESDWDGWADLTNKIGNKVQLVGDDLFVTNTRILKEGIEKKIANSILIKFNQIGSLSETLDAIKMAQDAGYTAVISHRSGETEDTTIADLAVATAAGQIKTGSLCRSDRVSKYNRLLRIEAELGAAAPYKGRAEFKS.

Gln167 serves as a coordination point for (2R)-2-phosphoglycerate. Glu209 serves as the catalytic Proton donor. The Mg(2+) site is built by Asp246, Glu289, and Asp316. The (2R)-2-phosphoglycerate site is built by Lys341, Arg370, Ser371, and Lys392. The Proton acceptor role is filled by Lys341.

It belongs to the enolase family. Component of the RNA degradosome, a multiprotein complex involved in RNA processing and mRNA degradation. It depends on Mg(2+) as a cofactor.

The protein localises to the cytoplasm. Its subcellular location is the secreted. It is found in the cell surface. The catalysed reaction is (2R)-2-phosphoglycerate = phosphoenolpyruvate + H2O. It functions in the pathway carbohydrate degradation; glycolysis; pyruvate from D-glyceraldehyde 3-phosphate: step 4/5. Its function is as follows. Catalyzes the reversible conversion of 2-phosphoglycerate (2-PG) into phosphoenolpyruvate (PEP). It is essential for the degradation of carbohydrates via glycolysis. This is Enolase from Cellvibrio japonicus (strain Ueda107) (Pseudomonas fluorescens subsp. cellulosa).